Here is a 426-residue protein sequence, read N- to C-terminus: UDP-N-acetylglucosamine 1-carboxyvinyltransferase (426 aa).

22-23 (KN) is a binding site for phosphoenolpyruvate. UDP-N-acetyl-alpha-D-glucosamine is bound at residue arginine 94. Cysteine 118 serves as the catalytic Proton donor. 2-(S-cysteinyl)pyruvic acid O-phosphothioketal is present on cysteine 118. UDP-N-acetyl-alpha-D-glucosamine contacts are provided by residues 123–127 (RPVDL), aspartate 310, and isoleucine 332.

Belongs to the EPSP synthase family. MurA subfamily.

The protein localises to the cytoplasm. It catalyses the reaction phosphoenolpyruvate + UDP-N-acetyl-alpha-D-glucosamine = UDP-N-acetyl-3-O-(1-carboxyvinyl)-alpha-D-glucosamine + phosphate. The protein operates within cell wall biogenesis; peptidoglycan biosynthesis. Cell wall formation. Adds enolpyruvyl to UDP-N-acetylglucosamine. The polypeptide is UDP-N-acetylglucosamine 1-carboxyvinyltransferase (Hyphomonas neptunium (strain ATCC 15444)).